The chain runs to 203 residues: GTP-binding protein rho4 (203 aa).

Position 21–28 (21–28) interacts with GTP; the sequence is GDGGCGKT. The short motif at 43-51 is the Effector region element; it reads YVPTVFENY. Residue 70–74 participates in GTP binding; sequence DTAGQ. Cys-200 carries the cysteine methyl ester modification. Cys-200 carries the S-geranylgeranyl cysteine lipid modification. The propeptide at 201–203 is removed in mature form; sequence VIL.

The protein belongs to the small GTPase superfamily. Rho family.

The protein localises to the membrane. Its function is as follows. Required for cell separation. Involved in the regulation of the septum degradation during cytokinesis and in the organization of F-actin patches and cytoplasmic microtubules. This Schizosaccharomyces pombe (strain 972 / ATCC 24843) (Fission yeast) protein is GTP-binding protein rho4 (rho4).